We begin with the raw amino-acid sequence, 720 residues long: Ciliated left-right organizer metallopeptidase (720 aa).

Positions 1-25 (MTVSFSMFQIYRLVWLSFMTSMCLS) are cleaved as a signal peptide. The Extracellular portion of the chain corresponds to 26–668 (ACIHDSVLQE…ALYVSHMLYS (643 aa)). His-243 serves as a coordination point for Zn(2+). Residue Glu-244 is part of the active site. 2 residues coordinate Zn(2+): His-247 and His-322. Residues 669–689 (YVIGGGCCAVCGAAIIFALFW) traverse the membrane as a helical segment. At 690–720 (YKLRRQFLRVGSSYPPETSNHERPQIPADLV) the chain is on the cytoplasmic side.

Belongs to the peptidase M8 family. The cofactor is Zn(2+).

It localises to the membrane. Putative metalloprotease playing a role in the process of LR patterning. The protein is Ciliated left-right organizer metallopeptidase (cirop) of Xenopus laevis (African clawed frog).